The chain runs to 292 residues: Protease HtpX homolog (292 aa).

The next 2 helical transmembrane spans lie at 9–29 (TGVLMAFLTGLLMAIGYVLGN) and 31–51 (TGMMFAFMFALVMNFFSYWYS). Position 133 (His133) interacts with Zn(2+). Glu134 is an active-site residue. His137 is a Zn(2+) binding site. 2 helical membrane passes run 148–168 (LAAVMAGAIMMVARWAGWMLW) and 185–205 (LGAILLIVLAPIAAMLIQMAI). Glu210 is a Zn(2+) binding site.

The protein belongs to the peptidase M48B family. It depends on Zn(2+) as a cofactor.

It localises to the cell membrane. This Thermococcus sibiricus (strain DSM 12597 / MM 739) protein is Protease HtpX homolog.